The sequence spans 429 residues: Trigger factor (429 aa).

The 86-residue stretch at Gly161–Pro246 folds into the PPIase FKBP-type domain.

It belongs to the FKBP-type PPIase family. Tig subfamily.

It is found in the cytoplasm. The enzyme catalyses [protein]-peptidylproline (omega=180) = [protein]-peptidylproline (omega=0). Its function is as follows. Involved in protein export. Acts as a chaperone by maintaining the newly synthesized protein in an open conformation. Functions as a peptidyl-prolyl cis-trans isomerase. This Ruthia magnifica subsp. Calyptogena magnifica protein is Trigger factor.